A 248-amino-acid polypeptide reads, in one-letter code: Aspartate/glutamate leucyltransferase (248 aa).

Belongs to the R-transferase family. Bpt subfamily.

It localises to the cytoplasm. The catalysed reaction is N-terminal L-glutamyl-[protein] + L-leucyl-tRNA(Leu) = N-terminal L-leucyl-L-glutamyl-[protein] + tRNA(Leu) + H(+). It carries out the reaction N-terminal L-aspartyl-[protein] + L-leucyl-tRNA(Leu) = N-terminal L-leucyl-L-aspartyl-[protein] + tRNA(Leu) + H(+). In terms of biological role, functions in the N-end rule pathway of protein degradation where it conjugates Leu from its aminoacyl-tRNA to the N-termini of proteins containing an N-terminal aspartate or glutamate. The polypeptide is Aspartate/glutamate leucyltransferase (Methylobacillus flagellatus (strain ATCC 51484 / DSM 6875 / VKM B-1610 / KT)).